The sequence spans 141 residues: Hemoglobin subunit alpha (141 aa).

Residues 1 to 141 form the Globin domain; the sequence is VLSEEDKSHV…VSAMLTSKYR (141 aa). His58 is an O2 binding site. His87 contacts heme b.

Belongs to the globin family. As to quaternary structure, heterotetramer of two alpha chains and two beta chains. As to expression, red blood cells.

Involved in oxygen transport from the lung to the various peripheral tissues. This is Hemoglobin subunit alpha (HBA) from Caiman crocodilus (Spectacled caiman).